The primary structure comprises 373 residues: Dynein regulatory complex protein 9 (373 aa).

Residues 145–200 (EQAMKETIEREKNTTAAVRQLRNDLREEKLDHEEKMKEKKKGLSTLKEQLKALKMD) are a coiled coil. The IQ domain maps to 336 to 365 (RAQAAVIIQAWWRGHKVRMVMSGGGKKGAK).

It belongs to the DRC9 family. Component of the nexin-dynein regulatory complex (N-DRC).

It is found in the cytoplasm. The protein localises to the cytoskeleton. Its subcellular location is the flagellum axoneme. Its function is as follows. Component of the nexin-dynein regulatory complex (N-DRC), a key regulator of ciliary/flagellar motility which maintains the alignment and integrity of the distal axoneme and regulates microtubule sliding in motile axonemes. The protein is Dynein regulatory complex protein 9 of Chlamydomonas reinhardtii (Chlamydomonas smithii).